Consider the following 262-residue polypeptide: Phosphatidylglycerol--prolipoprotein diacylglyceryl transferase (262 aa).

A run of 4 helical transmembrane segments spans residues 17–37 (LAIH…YALG), 57–77 (LIFY…VLFY), 95–115 (GGMS…LFAH), and 119–139 (LGFF…LAAG). Arg-140 lines the a 1,2-diacyl-sn-glycero-3-phospho-(1'-sn-glycerol) pocket. 3 helical membrane passes run 173-193 (PSQL…LWWY), 200-220 (AGQV…LVEF), and 227-247 (FLGL…PMVL).

Belongs to the Lgt family.

The protein localises to the cell inner membrane. It catalyses the reaction L-cysteinyl-[prolipoprotein] + a 1,2-diacyl-sn-glycero-3-phospho-(1'-sn-glycerol) = an S-1,2-diacyl-sn-glyceryl-L-cysteinyl-[prolipoprotein] + sn-glycerol 1-phosphate + H(+). The protein operates within protein modification; lipoprotein biosynthesis (diacylglyceryl transfer). Functionally, catalyzes the transfer of the diacylglyceryl group from phosphatidylglycerol to the sulfhydryl group of the N-terminal cysteine of a prolipoprotein, the first step in the formation of mature lipoproteins. This chain is Phosphatidylglycerol--prolipoprotein diacylglyceryl transferase, found in Bordetella bronchiseptica (strain ATCC BAA-588 / NCTC 13252 / RB50) (Alcaligenes bronchisepticus).